Reading from the N-terminus, the 216-residue chain is Uracil phosphoribosyltransferase (216 aa).

5-phospho-alpha-D-ribose 1-diphosphate is bound by residues Arg85, Arg110, and 135 to 143; that span reads DPMVATGYS. Uracil contacts are provided by residues Ile200 and 205–207; that span reads GDA. 5-phospho-alpha-D-ribose 1-diphosphate is bound at residue Asp206.

It belongs to the UPRTase family. Requires Mg(2+) as cofactor.

It catalyses the reaction UMP + diphosphate = 5-phospho-alpha-D-ribose 1-diphosphate + uracil. Its pathway is pyrimidine metabolism; UMP biosynthesis via salvage pathway; UMP from uracil: step 1/1. Allosterically activated by GTP. Its function is as follows. Catalyzes the conversion of uracil and 5-phospho-alpha-D-ribose 1-diphosphate (PRPP) to UMP and diphosphate. This Paraburkholderia xenovorans (strain LB400) protein is Uracil phosphoribosyltransferase.